The following is a 446-amino-acid chain: MERECEESVVVAVVTEPRFTQRYRDYLEEQKLLDRLHRVAKLRDGAVALPVLAESLSEQHLQELRDRVAPGSTCVLTRLPDPLPSKKARVRSPAQILCLEVRRWVEDRGVTWSAELEADLPRSWQRHGDLMLLSEDCFQATLWKGLEPELWETVASALGVQRLAKRGRVLPDGTRTPSVTLLLGDHGWVEHMDNGIRYKFDVTQCMFSFGNITEKLRVASLSCAGEVLVDLYAGIGYFTLPFLVHAGAAFVHACEWNPHAVVALRNNLEINGVADRCQIHFGDNRKLKLSDIADRVNLGLIPSSKEGWPVACQVLRKDVGGILHIHQNVESFSGKTPQPPGSNNVEKEHWPRPQKITTDTQGNGTTENFRGEISSANKPEWWRWAESAETQIASLLHQVHGKPWRTRILHVHPVKSYAPHVDHIVLDLECRPLTSSWPEGVDLLTQ.

S-adenosyl-L-methionine-binding positions include S208, K215, E255, and 283–284 (DN).

This sequence belongs to the class I-like SAM-binding methyltransferase superfamily. TRM5/TYW2 family.

It carries out the reaction 4-demethylwyosine(37) in tRNA(Phe) + S-adenosyl-L-methionine = 4-demethyl-7-[(3S)-3-amino-3-carboxypropyl]wyosine(37) in tRNA(Phe) + S-methyl-5'-thioadenosine + H(+). It functions in the pathway tRNA modification; wybutosine-tRNA(Phe) biosynthesis. Its function is as follows. S-adenosyl-L-methionine-dependent transferase that acts as a component of the wybutosine biosynthesis pathway. Wybutosine is a hyper modified guanosine with a tricyclic base found at the 3'-position adjacent to the anticodon of eukaryotic phenylalanine tRNA. Catalyzes the transfer of the alpha-amino-alpha-carboxypropyl (acp) group from S-adenosyl-L-methionine to the C-7 position of 4-demethylwyosine (imG-14) to produce wybutosine-86. This Mus musculus (Mouse) protein is tRNA wybutosine-synthesizing protein 2 homolog (Trmt12).